A 707-amino-acid polypeptide reads, in one-letter code: Coiled-coil domain-containing protein 177 (707 aa).

2 disordered regions span residues 1 to 65 and 183 to 294; these read MVDP…EGGR and PSAG…SALT. Low complexity-rich tracts occupy residues 38–49, 183–215, and 243–258; these read AASSASASASAA, PSAGSSSSCSSASLPASPAPRAARKASPSPSSA, and ALSSESGASSSSYSGE. S311 is subject to Phosphoserine. A coiled-coil region spans residues 364–605; it reads GQWELQRVHA…LQHATQVAEE (242 aa). Disordered regions lie at residues 372 to 426, 454 to 581, 597 to 637, and 652 to 707; these read HAKQ…RSEE, KLQQ…EREH, QHAT…RDED, and ERSE…LDRK. Composition is skewed to basic and acidic residues over residues 377–392, 399–426, 454–484, 491–514, 543–581, 618–637, and 652–664; these read REREEREKQRALEQGR, VEERRGRRGREEREAARRRQRQYERSEE, KLQQEQNLKQREEGLQEGRERAEQIRRERAQ, QRQEGQLQREKRELSRAERARHEA, ENYEHLVEQRTRELRERARREELQGRRAKEAAERKEREH, RLEKERAQRANKEKVERDED, and ERSEQLTRERRSA. Over residues 665 to 675 the composition is skewed to low complexity; it reads LESARSTARAS. Residues 677 to 707 show a composition bias toward basic and acidic residues; sequence HVREKVREETNTRSFDRMVREAQLHASLDRK.

The chain is Coiled-coil domain-containing protein 177 (CCDC177) from Homo sapiens (Human).